The sequence spans 385 residues: Phospho-N-acetylmuramoyl-pentapeptide-transferase (385 aa).

10 consecutive transmembrane segments (helical) span residues 23-43 (FITVRAALASITALGIALGAG), 79-99 (MGGIIILLSVGGATLLWGAVA), 103-123 (VWLSLVAMGGLGVVGFADDYV), 135-155 (AWYKVAGQVAVGLFVGSVLYF), 186-206 (LGVDLGWLVYLPVVVFIVTAV), 218-238 (GLTTGVTAFVSLGLVALVYVS), 258-278 (LTVFVAAVTAACFGFLWYNGY), 282-302 (VFMGDTGALALGGAVGSTILM), 307-327 (LLLPLLGIVYFAEALSVIVQT), and 362-382 (KIVTRFWIVTAITVIAALLIL).

It belongs to the glycosyltransferase 4 family. MraY subfamily. Mg(2+) serves as cofactor.

The protein resides in the cell inner membrane. It carries out the reaction UDP-N-acetyl-alpha-D-muramoyl-L-alanyl-gamma-D-glutamyl-meso-2,6-diaminopimeloyl-D-alanyl-D-alanine + di-trans,octa-cis-undecaprenyl phosphate = di-trans,octa-cis-undecaprenyl diphospho-N-acetyl-alpha-D-muramoyl-L-alanyl-D-glutamyl-meso-2,6-diaminopimeloyl-D-alanyl-D-alanine + UMP. The protein operates within cell wall biogenesis; peptidoglycan biosynthesis. Its function is as follows. Catalyzes the initial step of the lipid cycle reactions in the biosynthesis of the cell wall peptidoglycan: transfers peptidoglycan precursor phospho-MurNAc-pentapeptide from UDP-MurNAc-pentapeptide onto the lipid carrier undecaprenyl phosphate, yielding undecaprenyl-pyrophosphoryl-MurNAc-pentapeptide, known as lipid I. The sequence is that of Phospho-N-acetylmuramoyl-pentapeptide-transferase from Salinibacter ruber (strain DSM 13855 / M31).